We begin with the raw amino-acid sequence, 278 residues long: Rhomboid protease GlpG (278 aa).

6 helical membrane passes run 95–115 (GPLT…MQIL), 143–163 (AFLH…WYLG), 170–190 (LGSG…GWAQ), 192–212 (LFSG…MGYC), 224–241 (LMLP…LVAG), and 245–267 (ILGM…LMAF). The active-site Nucleophile is Ser-202. The active site involves His-255.

Belongs to the peptidase S54 family.

It localises to the cell inner membrane. The catalysed reaction is Cleaves type-1 transmembrane domains using a catalytic dyad composed of serine and histidine that are contributed by different transmembrane domains.. In terms of biological role, rhomboid-type serine protease that catalyzes intramembrane proteolysis. The sequence is that of Rhomboid protease GlpG from Serratia proteamaculans (strain 568).